The chain runs to 670 residues: Probable urocanate hydratase (670 aa).

Residues 126–127 (GG), Q204, 250–252 (GMS), E270, 316–317 (NV), 338–342 (QTSLH), 349–350 (FY), Y398, and G590 contribute to the NAD(+) site.

It belongs to the urocanase family. Requires NAD(+) as cofactor.

The enzyme catalyses 4-imidazolone-5-propanoate = trans-urocanate + H2O. It participates in amino-acid degradation; L-histidine degradation into L-glutamate; N-formimidoyl-L-glutamate from L-histidine: step 2/3. This Caenorhabditis elegans protein is Probable urocanate hydratase.